Here is a 1214-residue protein sequence, read N- to C-terminus: Protein charlatan (1214 aa).

3 disordered regions span residues 1–20 (MATL…QSSN), 213–238 (HVNQ…RQEH), and 250–284 (SANA…GGRK). Residues 258-276 (AQSTPTSAPSNSSGGSTSS) are compositionally biased toward low complexity. 2 C2H2-type zinc fingers span residues 305–327 (YACT…ENIH) and 333–356 (FQCY…LRMH). Disordered stretches follow at residues 367 to 397 (RRHV…NVTI) and 463 to 488 (PVAS…SGLL). Positions 473–485 (GSHGGNGNGGSGS) are enriched in gly residues. 2 C2H2-type zinc fingers span residues 496–518 (FTCC…LNTH) and 522–545 (FVCL…LKVH). Disordered regions lie at residues 741–790 (SASS…ATSP), 848–946 (NDED…SGPS), and 1062–1084 (LSTP…SNAS). 4 stretches are compositionally biased toward low complexity: residues 855–871 (QQHQ…QQQQ), 885–896 (NNNNNNNSNNNN), 923–946 (SPGT…SGPS), and 1071–1084 (KAAP…SNAS).

In terms of tissue distribution, expressed in the PNS and CNS. In early blastoderm stages, it is ubiquitously expressed, then, before stage 5, it disappears from the poles of the embryo and faint stripes are visible. At stage 5, it also accumulates in the dorsal region, cephalic furrow ectodermal patches between the tracheal pits, where neurons of the PNS appear. In older embryos (stage 15) a strong expression is mostly restricted to the central nervous system (CNS) and PNS. In PNS, the pattern suggests that expression occur in many of the neurons of the ventral, lateral and dorsal clusters of neurons. In third instar wing disks, it is expressed in rows of cells on either side of the prospective anterior wing margin and in groups of cells that coincide with proneural clusters of ac/sc expression. Also expressed independently of ac/sc in certain areas of the disk, such as the postnotum and posterior dorsal proximal wing. Expressed in the proneural clusters of the leg disks and in the eye/antenna disk.

The protein resides in the nucleus. Functionally, probable transcription factor involved in the development of the adult pattern of macrochaetae. Required for accumulation of achaete (ac) and scute (sc) in proneural clusters. Probably acts by binding to the proneural cluster-specific enhancers of the ac/sc complex and increasing enhancer efficiency, thereby acting as a stimulator of ac/sc expression in proneural clusters. Also required for correct development of the embryonic/larval peripheral nervous system (PNS). The protein is Protein charlatan (chn) of Drosophila melanogaster (Fruit fly).